The sequence spans 343 residues: Nuclear distribution protein nudE-like 1 (343 aa).

Residues 25-190 (KYKQSFQEAR…LAVRERQQEV (166 aa)) adopt a coiled-coil conformation. 2 disordered regions span residues 184–204 (RERQ…LDCE) and 322–343 (QGTP…PLSV).

This sequence belongs to the nudE family. Phosphorylated in mitosis.

The protein resides in the cytoplasm. It is found in the cytoskeleton. It localises to the microtubule organizing center. Its subcellular location is the centrosome. The protein localises to the spindle. Functionally, required for organization of the cellular microtubule array and microtubule anchoring at the centrosome. Positively regulates the activity of the minus-end directed microtubule motor protein dynein. May enhance dynein-mediated microtubule sliding by targeting dynein to the microtubule plus end. Positively regulates lysosome peripheral distribution and ruffled border formation in osteoclasts. The polypeptide is Nuclear distribution protein nudE-like 1 (NDEL1) (Gallus gallus (Chicken)).